The primary structure comprises 356 residues: DNA polymerase IV (356 aa).

One can recognise a UmuC domain in the interval 7-188 (IIHIDMDAFY…IPVTKFYGVG (182 aa)). Mg(2+)-binding residues include aspartate 11 and aspartate 106. The active site involves glutamate 107.

The protein belongs to the DNA polymerase type-Y family. Monomer. Mg(2+) is required as a cofactor.

It is found in the cytoplasm. The catalysed reaction is DNA(n) + a 2'-deoxyribonucleoside 5'-triphosphate = DNA(n+1) + diphosphate. Poorly processive, error-prone DNA polymerase involved in untargeted mutagenesis. Copies undamaged DNA at stalled replication forks, which arise in vivo from mismatched or misaligned primer ends. These misaligned primers can be extended by PolIV. Exhibits no 3'-5' exonuclease (proofreading) activity. May be involved in translesional synthesis, in conjunction with the beta clamp from PolIII. This chain is DNA polymerase IV, found in Listeria monocytogenes serotype 4a (strain HCC23).